The sequence spans 615 residues: MGADRGRGGRRRPARVVAYAVGGVVLLAGCAAMPDSGDLRGVESTPRQDPQVRVFAMPPREDAPPADIVQGFLEALTSDDPHYETARKYLTGDAAKSWRPDESATVLAGGPGTESDHSGNREDANDYSVTLTGTRVATVDAQQSYAPADGVYRESVHLTRDGKSKQWRIDSLPPGVVMGKSDFQRNYMSVNRYYFASNTPVRAAAETGPVREPAAVADPVYVRRRVDPMTQVVRSLLSGPTSLLGPVVRSSFPTGTALAKNAGSLAPDDRSKLTVPLNDKAARAGADKCDEMAAQLLFTLQNLTPAVQEVELRSGGEQLCSLSEDRAETVATRGSAQRPDYLYFVDDQDRLVRIAAGSNGTRAEPVPGPLGEGHQALRSVAVSRDEHSAAGIGLDNKLLYVGSLVSGGSLGDPVLASQGKTESDRLTPPSWDAQGDLWIADRNPADPRLLLLKEGAGDPVEVRTPGLDGRVQAVRVAADGVRIALVVEKDGKRSLLIGRIERDGKAGDVPAVTVLELRSATPELEEVTAMSWAGDARLVVVGRERGGVQQIGYVQVDGSTPEASVPAALTGVKEIAATEDERLPLVAYSEDLIVRLPSGLQWQKVTEGTAPVYPG.

A signal peptide spans M1–G29. C30 carries the N-palmitoyl cysteine lipid modification. The S-diacylglycerol cysteine moiety is linked to residue C30. The segment at P100–D123 is disordered. A compositionally biased stretch (basic and acidic residues) spans E114–D123.

Belongs to the LpqB lipoprotein family.

The protein resides in the cell membrane. This chain is Lipoprotein LpqB, found in Streptomyces coelicolor (strain ATCC BAA-471 / A3(2) / M145).